Consider the following 361-residue polypeptide: RLA class I histocompatibility antigen, alpha chain 11/11 (361 aa).

A signal peptide spans 1 to 24; it reads MGSMAPRTLLLLLAGALTLKDTQA. The tract at residues 25–114 is alpha-1; that stretch reads GSHSMRYFYT…ALRYYNQSAA (90 aa). The Extracellular segment spans residues 25–308; sequence GSHSMRYFYT…EPPAQPTALI (284 aa). A glycan (N-linked (GlcNAc...) asparagine) is linked at asparagine 110. The alpha-2 stretch occupies residues 115-206; it reads GSHTFQTMFG…EMGKETLQRA (92 aa). Intrachain disulfides connect cysteine 125–cysteine 188 and cysteine 227–cysteine 283. Residues 207-298 are alpha-3; that stretch reads DPPKAHVTHH…GLPEPLTLTW (92 aa). The Ig-like C1-type domain occupies 209 to 297; the sequence is PKAHVTHHPA…EGLPEPLTLT (89 aa). Positions 299–308 are connecting peptide; it reads EPPAQPTALI. The helical transmembrane segment at 309–329 threads the bilayer; that stretch reads VGIVAGVLGVLLILGAVVAVV. Residues 330 to 361 are Cytoplasmic-facing; that stretch reads RRKKHSSDGKGGRYTPAAGGHRDQGSDDSLMP. The disordered stretch occupies residues 335-361; the sequence is SSDGKGGRYTPAAGGHRDQGSDDSLMP. A phosphoserine mark is found at serine 355 and serine 358.

The protein belongs to the MHC class I family. Heterodimer of an alpha chain and a beta chain (beta-2-microglobulin).

The protein resides in the membrane. Its function is as follows. Involved in the presentation of foreign antigens to the immune system. In Oryctolagus cuniculus (Rabbit), this protein is RLA class I histocompatibility antigen, alpha chain 11/11.